Consider the following 87-residue polypeptide: Large ribosomal subunit protein bL27 (87 aa).

The segment at 1–24 (MATKKAGGSSRNGRDSAGRRLGVK) is disordered.

This sequence belongs to the bacterial ribosomal protein bL27 family.

This Rickettsia massiliae (strain Mtu5) protein is Large ribosomal subunit protein bL27.